A 196-amino-acid chain; its full sequence is Thymidine kinase (196 aa).

Position 17 to 24 (17 to 24 (GPMFAGKT)) interacts with ATP. Glutamate 92 (proton acceptor) is an active-site residue. Residue phenylalanine 121 participates in substrate binding. Residues cysteine 146 and cysteine 149 each coordinate Zn(2+). 166 to 170 (LILAG) serves as a coordination point for substrate. Residues cysteine 179 and cysteine 182 each contribute to the Zn(2+) site.

This sequence belongs to the thymidine kinase family.

The catalysed reaction is thymidine + ATP = dTMP + ADP + H(+). In terms of biological role, phosphorylates thymidine. ASFV replicates in the cytoplasm of infected cells and contains genes encoding a number of enzymes needed for DNA synthesis, including thymidine kinase. Important for growth in swine macrophages in vitro and is a virus virulence factor in swine. In Ornithodoros (relapsing fever ticks), this protein is Thymidine kinase.